The primary structure comprises 268 residues: Small ribosomal subunit protein eS1 (268 aa).

Positions Met-1–Val-21 are disordered.

It belongs to the eukaryotic ribosomal protein eS1 family. As to quaternary structure, component of the small ribosomal subunit. Mature ribosomes consist of a small (40S) and a large (60S) subunit. The 40S subunit contains about 33 different proteins and 1 molecule of RNA (18S). The 60S subunit contains about 49 different proteins and 3 molecules of RNA (28S, 5.8S and 5S).

It localises to the cytoplasm. In terms of biological role, essential for oogenesis; required for late follicle cell development. In Drosophila persimilis (Fruit fly), this protein is Small ribosomal subunit protein eS1.